A 432-amino-acid polypeptide reads, in one-letter code: Adenylosuccinate synthetase (432 aa).

GTP is bound by residues 13-19 (GDEGKGK) and 41-43 (GHT). The active-site Proton acceptor is D14. Mg(2+)-binding residues include D14 and G41. IMP is bound by residues 14–17 (DEGK), 39–42 (NAGH), T130, R144, Q225, T240, and R304. H42 functions as the Proton donor in the catalytic mechanism. 300–306 (ATTGRRR) lines the substrate pocket. GTP-binding positions include R306, 332–334 (KLD), and 415–417 (STG).

Belongs to the adenylosuccinate synthetase family. Homodimer. Mg(2+) serves as cofactor.

Its subcellular location is the cytoplasm. It carries out the reaction IMP + L-aspartate + GTP = N(6)-(1,2-dicarboxyethyl)-AMP + GDP + phosphate + 2 H(+). Its pathway is purine metabolism; AMP biosynthesis via de novo pathway; AMP from IMP: step 1/2. Functionally, plays an important role in the de novo pathway of purine nucleotide biosynthesis. Catalyzes the first committed step in the biosynthesis of AMP from IMP. The protein is Adenylosuccinate synthetase of Baumannia cicadellinicola subsp. Homalodisca coagulata.